We begin with the raw amino-acid sequence, 49 residues long: MCDWKGRDNCPAPARKTSCVSRAALHSNVRWKWCEKSTLDRASNCWRGT.

This is an uncharacterized protein from Saccharomyces cerevisiae (strain ATCC 204508 / S288c) (Baker's yeast).